A 256-amino-acid chain; its full sequence is E3 ubiquitin-protein ligase MIR2 (256 aa).

Topologically, residues 1–83 are cytoplasmic; it reads MASKDVEEGV…NLWPEMERQE (83 aa). Residues 7–66 form an RING-CH-type zinc finger; it reads EEGVEGPICWICREEVGNEGIHPCACTGELDVVHPQCLSTWLTVSRNTACQMCRVIYRTR. Positions 15, 18, 30, 32, 40, 43, 56, and 59 each coordinate Zn(2+). The helical transmembrane segment at 84 to 104 threads the bilayer; the sequence is IFELFLLMSVVVAGLVGVALC. The Extracellular segment spans residues 105–124; it reads TWTLLVILTAPAGTFSPGAV. A helical membrane pass occupies residues 125–145; sequence LGFLCFFGFYQIFIVFAFGGI. Over 146–256 the chain is Cytoplasmic; it reads CRVSGTVRAL…VRKNHPKNNG (111 aa). Residues 179 to 256 are disordered; sequence DNIELTVLVG…VRKNHPKNNG (78 aa). Over residues 193–203 the composition is skewed to acidic residues; it reads TDEEPTDESSE. Positions 245 to 256 are enriched in basic residues; it reads KPVRKNHPKNNG.

Binds human MHC-I, CD86, ICAM1 and CD1D.

Its subcellular location is the host cell membrane. The protein localises to the host endoplasmic reticulum. It catalyses the reaction S-ubiquitinyl-[E2 ubiquitin-conjugating enzyme]-L-cysteine + [acceptor protein]-L-lysine = [E2 ubiquitin-conjugating enzyme]-L-cysteine + N(6)-ubiquitinyl-[acceptor protein]-L-lysine.. The protein operates within protein modification; protein ubiquitination. Its function is as follows. Membrane-bound E3 ubiquitin ligase expressed at the immediate early stage of viral reactivation to mediate polyubiquitination of various host membrane proteins related to the immune response. Promotes ubiquitination and subsequent degradation of host MHC-I, CD86, DC-SIGN and DC-SIGNR, ICAM1 and CD1D molecules, presumably to prevent lysis of infected cells by cytotoxic T-lymphocytes and NK cell. Plays a role in the down-regulation of the host stress-induced NKG2D ligands MICA, MICB and CLEC2B, which enable immune cells expressing the NKG2D receptor to recognize and annihilate infected cells prior to viral spread. Alters monocyte metabolism and proliferation by mediating rapid internalization of cellular growth factor-binding receptor tyrosine kinases from the surface leading to increased signaling. The chain is E3 ubiquitin-protein ligase MIR2 (K5) from Homo sapiens (Human).